We begin with the raw amino-acid sequence, 366 residues long: Aminomethyltransferase (366 aa).

The protein belongs to the GcvT family. The glycine cleavage system is composed of four proteins: P, T, L and H.

The enzyme catalyses N(6)-[(R)-S(8)-aminomethyldihydrolipoyl]-L-lysyl-[protein] + (6S)-5,6,7,8-tetrahydrofolate = N(6)-[(R)-dihydrolipoyl]-L-lysyl-[protein] + (6R)-5,10-methylene-5,6,7,8-tetrahydrofolate + NH4(+). In terms of biological role, the glycine cleavage system catalyzes the degradation of glycine. The sequence is that of Aminomethyltransferase from Bacillus cytotoxicus (strain DSM 22905 / CIP 110041 / 391-98 / NVH 391-98).